Here is a 422-residue protein sequence, read N- to C-terminus: Glutamyl-tRNA reductase (422 aa).

Substrate contacts are provided by residues 49 to 52 (TCNR), Ser110, 115 to 117 (EPQ), and Gln121. Cys50 serves as the catalytic Nucleophile. 190–195 (GAGETI) contributes to the NADP(+) binding site.

It belongs to the glutamyl-tRNA reductase family. In terms of assembly, homodimer.

The enzyme catalyses (S)-4-amino-5-oxopentanoate + tRNA(Glu) + NADP(+) = L-glutamyl-tRNA(Glu) + NADPH + H(+). It functions in the pathway porphyrin-containing compound metabolism; protoporphyrin-IX biosynthesis; 5-aminolevulinate from L-glutamyl-tRNA(Glu): step 1/2. In terms of biological role, catalyzes the NADPH-dependent reduction of glutamyl-tRNA(Glu) to glutamate 1-semialdehyde (GSA). This chain is Glutamyl-tRNA reductase, found in Colwellia psychrerythraea (strain 34H / ATCC BAA-681) (Vibrio psychroerythus).